The chain runs to 241 residues: Glucosamine-6-phosphate deaminase (241 aa).

The Proton acceptor; for enolization step role is filled by Asp67. The active-site For ring-opening step is the Asn136. The active-site Proton acceptor; for ring-opening step is His138. Glu143 acts as the For ring-opening step in catalysis.

Belongs to the glucosamine/galactosamine-6-phosphate isomerase family. NagB subfamily.

It carries out the reaction alpha-D-glucosamine 6-phosphate + H2O = beta-D-fructose 6-phosphate + NH4(+). It participates in amino-sugar metabolism; N-acetylneuraminate degradation; D-fructose 6-phosphate from N-acetylneuraminate: step 5/5. Its function is as follows. Catalyzes the reversible isomerization-deamination of glucosamine 6-phosphate (GlcN6P) to form fructose 6-phosphate (Fru6P) and ammonium ion. The protein is Glucosamine-6-phosphate deaminase of Alkaliphilus oremlandii (strain OhILAs) (Clostridium oremlandii (strain OhILAs)).